Reading from the N-terminus, the 183-residue chain is Protein jagunal homolog 1 (183 aa).

The Cytoplasmic segment spans residues 1 to 39 (MASRAGPRAAGTDGSDFQHRERVAMHYQMSVTLKYEIKK). Serine 3 is subject to Phosphoserine. The helical transmembrane segment at 40-60 (LIYVHLVIWLLLVAKMSVGHL) threads the bilayer. The Lumenal portion of the chain corresponds to 61–71 (RLLSHDQVAMP). A helical transmembrane segment spans residues 72–92 (YQWEYPYLLSILPSLLGLLSF). The Cytoplasmic portion of the chain corresponds to 93-96 (PRNN). Residues 97 to 117 (ISYLVLSMISMGLFSIAPLIY) traverse the membrane as a helical segment. The Lumenal segment spans residues 118-137 (GSMEMFPAAQQLYRHGKAYR). Residues 138-158 (FLFGFSAVSIMYLVLVLAVQV) traverse the membrane as a helical segment. At 159-183 (HAWQLYYSKKLLDSWFTSTQEKKHK) the chain is on the cytoplasmic side.

The protein belongs to the jagunal family. Interacts with COPA, COPB2 and COPG2. As to expression, ubiquitously expressed.

Its subcellular location is the endoplasmic reticulum membrane. In terms of biological role, endoplasmic reticulum transmembrane protein involved in vesicle-mediated transport, which is required for neutrophil function. Required for vesicle-mediated transport; it is however unclear whether it is involved in early secretory pathway or intracellular protein transport. Acts as a regulator of neutrophil function, probably via its role in vesicle-mediated transport: required for defense against fungal pathogens and for granulocyte colony-stimulating factor (GM-CSF) signaling pathway; possibly by regulating glycosylation and/or targeting of proteins contributing to the viability and migration of neutrophils. The chain is Protein jagunal homolog 1 from Homo sapiens (Human).